Here is a 207-residue protein sequence, read N- to C-terminus: MEGDAPVAAAAHYQPASPPRDACVYNSCYCEENIWKLCEYIKNHDQYPLEECYAVFISNERKMIPIWKQQARPGDGPVIWDYHVVLLHVSSGGQSFIYDLDTVLPFPCPFDTYVEDAFKSDEDIHPQFRRKFRVIRADSYLKNFASDRSHMKDSSGNWREPPPSYPCIETGDSKMNLNDFISMDPEVGWGAVYSLPEFVHRFSSQNY.

Active-site residues include C30, H83, and D99.

This sequence belongs to the NTAQ1 family. In terms of assembly, monomer.

It localises to the cytoplasm. The protein localises to the cytosol. It is found in the nucleus. It catalyses the reaction N-terminal L-glutaminyl-[protein] + H2O = N-terminal L-glutamyl-[protein] + NH4(+). Its function is as follows. Mediates the side-chain deamidation of N-terminal glutamine residues to glutamate, an important step in N-end rule pathway of protein degradation. Conversion of the resulting N-terminal glutamine to glutamate renders the protein susceptible to arginylation, polyubiquitination and degradation as specified by the N-end rule. Does not act on substrates with internal or C-terminal glutamine and does not act on non-glutamine residues in any position. Does not deaminate acetylated N-terminal glutamine. With the exception of proline, all tested second-position residues on substrate peptides do not greatly influence the activity. In contrast, a proline at position 2, virtually abolishes deamidation of N-terminal glutamine. This chain is Protein N-terminal glutamine amidohydrolase (NTAQ1), found in Bos taurus (Bovine).